A 214-amino-acid chain; its full sequence is UPF0758 protein (214 aa).

An MPN domain is found at 92–214 (VLSSWQALLD…ELSFRAEGLL (123 aa)). Zn(2+)-binding residues include H163, H165, and D176. The JAMM motif signature appears at 163–176 (HNHPSGDPTPSQAD).

Belongs to the UPF0758 family.

The protein is UPF0758 protein of Rhodobacter capsulatus (Rhodopseudomonas capsulata).